Reading from the N-terminus, the 227-residue chain is Pyridoxine-5'-phosphate oxidase (227 aa).

20 to 23 (RKDY) lines the pyridoxal 5'-phosphate pocket. 75-78 (RVVL) provides a ligand contact to FMN. A pyridoxal 5'-phosphate-binding site is contributed by Lys-80. FMN is bound by residues 90–91 (YT), 96–97 (RK), and Gln-117. Residues Tyr-135, Arg-139, and Ser-143 each contribute to the pyridoxal 5'-phosphate site. FMN is bound by residues 152–153 (FQ) and Trp-197. A pyridoxal 5'-phosphate-binding site is contributed by 203 to 205 (RIH). Arg-207 is an FMN binding site.

This sequence belongs to the pyridoxamine 5'-phosphate oxidase family. Homodimer. FMN is required as a cofactor.

It catalyses the reaction pyridoxamine 5'-phosphate + O2 + H2O = pyridoxal 5'-phosphate + H2O2 + NH4(+). The catalysed reaction is pyridoxine 5'-phosphate + O2 = pyridoxal 5'-phosphate + H2O2. Its pathway is cofactor metabolism; pyridoxal 5'-phosphate salvage; pyridoxal 5'-phosphate from pyridoxamine 5'-phosphate: step 1/1. It participates in cofactor metabolism; pyridoxal 5'-phosphate salvage; pyridoxal 5'-phosphate from pyridoxine 5'-phosphate: step 1/1. In terms of biological role, catalyzes the oxidation of either pyridoxine 5'-phosphate (PNP) or pyridoxamine 5'-phosphate (PMP) into pyridoxal 5'-phosphate (PLP). This chain is Pyridoxine-5'-phosphate oxidase (pnpo), found in Dictyostelium discoideum (Social amoeba).